The primary structure comprises 70 residues: Small ribosomal subunit protein bS21 (70 aa).

Belongs to the bacterial ribosomal protein bS21 family.

The chain is Small ribosomal subunit protein bS21 from Helicobacter acinonychis (strain Sheeba).